The chain runs to 290 residues: Diaminopimelate epimerase (290 aa).

Residues asparagine 17, glutamine 49, and asparagine 69 each coordinate substrate. The active-site Proton donor is the cysteine 78. Substrate-binding positions include 79–80 (GN), asparagine 166, asparagine 199, and 217–218 (ER). Cysteine 226 serves as the catalytic Proton acceptor. A substrate-binding site is contributed by 227–228 (GS).

Belongs to the diaminopimelate epimerase family. As to quaternary structure, homodimer.

It is found in the cytoplasm. The enzyme catalyses (2S,6S)-2,6-diaminopimelate = meso-2,6-diaminopimelate. It functions in the pathway amino-acid biosynthesis; L-lysine biosynthesis via DAP pathway; DL-2,6-diaminopimelate from LL-2,6-diaminopimelate: step 1/1. In terms of biological role, catalyzes the stereoinversion of LL-2,6-diaminopimelate (L,L-DAP) to meso-diaminopimelate (meso-DAP), a precursor of L-lysine and an essential component of the bacterial peptidoglycan. The sequence is that of Diaminopimelate epimerase from Afipia carboxidovorans (strain ATCC 49405 / DSM 1227 / KCTC 32145 / OM5) (Oligotropha carboxidovorans).